Reading from the N-terminus, the 510-residue chain is Protein ERGIC-53 (510 aa).

A signal peptide spans methionine 1–glycine 30. Residues aspartate 31 to serine 477 are Lumenal-facing. Residues arginine 44–leucine 267 form the L-type lectin-like domain. Residues serine 88 and aspartate 121 each contribute to the a carbohydrate site. 3 residues coordinate Ca(2+): aspartate 152, phenylalanine 154, and asparagine 156. A carbohydrate is bound by residues asparagine 156 and histidine 178. Aspartate 181 provides a ligand contact to Ca(2+). Residues cysteine 190 and cysteine 230 are joined by a disulfide bond. A carbohydrate is bound at residue glycine 251 to leucine 253. Serine 425 carries the post-translational modification Phosphoserine. The chain crosses the membrane as a helical span at residues threonine 478–tyrosine 498. Topologically, residues arginine 499–phenylalanine 510 are cytoplasmic. Positions arginine 499–phenylalanine 510 are mediates interaction with RAB3GAP1, RAB3GAP2 and UBXN6. The short motif at phenylalanine 509–phenylalanine 510 is the ER export motif element.

As to quaternary structure, exists both as a covalent disulfide-linked homohexamer, and a complex of three disulfide-linked dimers non-covalently kept together. Interacts with MCFD2. May interact with TMEM115. Interacts with RAB3GAP1 and RAB3GAP2. Interacts with UBXN6. Interacts with SERPINA1/alpha1-antitrypsin. Interacts with BET1. Post-translationally, the N-terminal may be partly blocked. Ubiquitous.

Its subcellular location is the endoplasmic reticulum-Golgi intermediate compartment membrane. The protein resides in the golgi apparatus membrane. It localises to the endoplasmic reticulum membrane. Mannose-specific lectin. May recognize sugar residues of glycoproteins, glycolipids, or glycosylphosphatidyl inositol anchors and may be involved in the sorting or recycling of proteins, lipids, or both. The LMAN1-MCFD2 complex forms a specific cargo receptor for the ER-to-Golgi transport of selected proteins. The protein is Protein ERGIC-53 (LMAN1) of Homo sapiens (Human).